We begin with the raw amino-acid sequence, 153 residues long: Large ribosomal subunit protein uL15 (153 aa).

Residues 15–42 (ARRIVGRGSSSGRGTTSGRGTKGQQARA) form a disordered region. Residues 23-35 (SSSGRGTTSGRGT) show a composition bias toward gly residues.

This sequence belongs to the universal ribosomal protein uL15 family. As to quaternary structure, part of the 50S ribosomal subunit.

Functionally, binds to the 23S rRNA. This is Large ribosomal subunit protein uL15 from Treponema pallidum (strain Nichols).